The following is a 175-amino-acid chain: Transcription factor HES-3 (175 aa).

Residues 1–49 (MEKKRRARINLSLEQLRSLLERHYSHQIRKRKLEKADILELSVKYVRSL) enclose the bHLH domain. Residues 65–98 (YPSGFRGGLPGSSQRLRPGEDDSGLRCPLLLQRR) form the Orange domain. Low complexity predominate over residues 124–145 (PGPPAGGSQSPQSPFPPLGGLL). The interval 124–175 (PGPPAGGSQSPQSPFPPLGGLLESSTGILAPPPASNCQAENPRPGFRVWRPW) is disordered. Residues 172–175 (WRPW) carry the WRPW motif motif.

In terms of assembly, transcription repression requires formation of a complex with a corepressor protein of the Groucho/TLE family. Expressed exclusively in Purkinje cells.

It localises to the nucleus. In terms of biological role, transcriptional repressor of genes that require a bHLH protein for their transcription. The sequence is that of Transcription factor HES-3 (Hes3) from Rattus norvegicus (Rat).